We begin with the raw amino-acid sequence, 231 residues long: Ribosomal RNA small subunit methyltransferase G (231 aa).

S-adenosyl-L-methionine-binding positions include glycine 75, phenylalanine 80, 126–127, and arginine 142; that span reads AE.

It belongs to the methyltransferase superfamily. RNA methyltransferase RsmG family.

The protein localises to the cytoplasm. Its function is as follows. Specifically methylates the N7 position of a guanine in 16S rRNA. This is Ribosomal RNA small subunit methyltransferase G from Mycoplasma capricolum subsp. capricolum (strain California kid / ATCC 27343 / NCTC 10154).